A 125-amino-acid polypeptide reads, in one-letter code: Protein Turandot F (125 aa).

The first 19 residues, 1–19 (MKTVILFGFLLALLGYLEA), serve as a signal peptide directing secretion.

It belongs to the Turandot family.

The protein localises to the secreted. Its function is as follows. A humoral factor that may play a role in stress tolerance. In Drosophila melanogaster (Fruit fly), this protein is Protein Turandot F.